Reading from the N-terminus, the 148-residue chain is Large ribosomal subunit protein uL15 (148 aa).

The span at 1–28 shows a compositional bias: basic residues; that stretch reads MIRRRKKVRKLRGSHTHGWGCKKKHRGG. The segment at 1–43 is disordered; that stretch reads MIRRRKKVRKLRGSHTHGWGCKKKHRGGGSKGGRGMAGTGKRK. Gly residues predominate over residues 29–38; that stretch reads GSKGGRGMAG.

The protein belongs to the universal ribosomal protein uL15 family. Part of the 50S ribosomal subunit.

Functionally, binds to the 23S rRNA. This is Large ribosomal subunit protein uL15 from Thermococcus kodakarensis (strain ATCC BAA-918 / JCM 12380 / KOD1) (Pyrococcus kodakaraensis (strain KOD1)).